Consider the following 221-residue polypeptide: Octanoyltransferase (221 aa).

Positions aspartate 29 to arginine 208 constitute a BPL/LPL catalytic domain. Substrate contacts are provided by residues arginine 67–histidine 74, alanine 138–glycine 140, and glycine 151–alanine 153. The active-site Acyl-thioester intermediate is the cysteine 169.

This sequence belongs to the LipB family.

The protein resides in the cytoplasm. It carries out the reaction octanoyl-[ACP] + L-lysyl-[protein] = N(6)-octanoyl-L-lysyl-[protein] + holo-[ACP] + H(+). It functions in the pathway protein modification; protein lipoylation via endogenous pathway; protein N(6)-(lipoyl)lysine from octanoyl-[acyl-carrier-protein]: step 1/2. Catalyzes the transfer of endogenously produced octanoic acid from octanoyl-acyl-carrier-protein onto the lipoyl domains of lipoate-dependent enzymes. Lipoyl-ACP can also act as a substrate although octanoyl-ACP is likely to be the physiological substrate. The protein is Octanoyltransferase of Acidothermus cellulolyticus (strain ATCC 43068 / DSM 8971 / 11B).